The primary structure comprises 404 residues: uncharacterized protein (404 aa).

11 helical membrane-spanning segments follow: residues 9 to 29 (IYLI…PYLS), 36 to 56 (GFGE…FIGL), 76 to 96 (LVVK…LLFC), 103 to 123 (IMFY…QLSI), 135 to 155 (FIQV…LEFY), 162 to 182 (KRIL…YLIY), 199 to 219 (AFFY…SFFI), 236 to 256 (LGLY…ILAI), 288 to 308 (IVPI…LFFL), 319 to 339 (IIVF…VNYL), and 366 to 386 (LIFT…LGIL).

Belongs to the polysaccharide synthase family. HI_0867/HI_1700 subfamily.

Its subcellular location is the cell membrane. This is an uncharacterized protein from Haemophilus influenzae (strain ATCC 51907 / DSM 11121 / KW20 / Rd).